The following is a 106-amino-acid chain: Chaperone modulatory protein CbpM (106 aa).

Belongs to the CbpM family.

In terms of biological role, interacts with CbpA and inhibits both the DnaJ-like co-chaperone activity and the DNA binding activity of CbpA. Together with CbpA, modulates the activity of the DnaK chaperone system. Does not inhibit the co-chaperone activity of DnaJ. The sequence is that of Chaperone modulatory protein CbpM from Coxiella burnetii (strain CbuK_Q154) (Coxiella burnetii (strain Q154)).